A 389-amino-acid polypeptide reads, in one-letter code: Phosphoribosylformylglycinamidine cyclo-ligase, chloroplastic (389 aa).

A chloroplast-targeting transit peptide spans 1 to 58; the sequence is MEARILQSSSSCYSSLYAVNRSRFSSVSSPKPFSVSFAQTTRTRTRVLSMSKKDGRTD. A disordered region spans residues 46–65; it reads RVLSMSKKDGRTDKDDDTDS.

This sequence belongs to the AIR synthase family.

It localises to the plastid. The protein localises to the chloroplast. The enzyme catalyses 2-formamido-N(1)-(5-O-phospho-beta-D-ribosyl)acetamidine + ATP = 5-amino-1-(5-phospho-beta-D-ribosyl)imidazole + ADP + phosphate + H(+). The protein operates within purine metabolism; IMP biosynthesis via de novo pathway; 5-amino-1-(5-phospho-D-ribosyl)imidazole from N(2)-formyl-N(1)-(5-phospho-D-ribosyl)glycinamide: step 2/2. This is Phosphoribosylformylglycinamidine cyclo-ligase, chloroplastic (PUR5) from Arabidopsis thaliana (Mouse-ear cress).